The following is a 420-amino-acid chain: Probable glycosyltransferase YdaM (420 aa).

4 helical membrane-spanning segments follow: residues 4–24 (TLFF…MFLM), 299–319 (IIFD…GVIM), 332–352 (LHLS…FLFM), and 371–391 (FFIV…LVIY).

Belongs to the glycosyltransferase 2 family.

It is found in the cell membrane. This Bacillus subtilis (strain 168) protein is Probable glycosyltransferase YdaM (ydaM).